The following is a 130-amino-acid chain: Ornithine decarboxylase antizyme (130 aa).

The span at 1 to 14 (SDVPVHHRTDHDRA) shows a compositional bias: basic and acidic residues. The tract at residues 1 to 56 (SDVPVHHRTDHDRASLLTGSSRKSSVDSAGGSLFEASSRASSPSSSSSSECSDTES) is disordered. Residues 17–27 (LTGSSRKSSVD) show a composition bias toward polar residues. Residues 32–51 (SLFEASSRASSPSSSSSSEC) show a composition bias toward low complexity.

This sequence belongs to the ODC antizyme family. As to quaternary structure, interacts with ODC1 and thereby sterically blocks ODC homodimerization.

In terms of biological role, ornithine decarboxylase (ODC) antizyme protein that negatively regulates ODC activity and intracellular polyamine biosynthesis and uptake in response to increased intracellular polyamine levels. Binds to ODC monomers, inhibiting the assembly of the functional ODC homodimer, and targets the monomers for ubiquitin-independent proteolytic destruction by the 26S proteasome. In Drosophila virilis (Fruit fly), this protein is Ornithine decarboxylase antizyme (Oda).